Consider the following 251-residue polypeptide: Hydroxyacylglutathione hydrolase (251 aa).

Zn(2+) is bound by residues histidine 53, histidine 55, aspartate 57, histidine 58, histidine 110, aspartate 127, and histidine 165.

This sequence belongs to the metallo-beta-lactamase superfamily. Glyoxalase II family. In terms of assembly, monomer. The cofactor is Zn(2+).

It catalyses the reaction an S-(2-hydroxyacyl)glutathione + H2O = a 2-hydroxy carboxylate + glutathione + H(+). Its pathway is secondary metabolite metabolism; methylglyoxal degradation; (R)-lactate from methylglyoxal: step 2/2. Its function is as follows. Thiolesterase that catalyzes the hydrolysis of S-D-lactoyl-glutathione to form glutathione and D-lactic acid. This is Hydroxyacylglutathione hydrolase from Salmonella paratyphi A (strain ATCC 9150 / SARB42).